Consider the following 576-residue polypeptide: K(+)/H(+) antiporter NhaP2 (576 aa).

13 helical membrane-spanning segments follow: residues 6-26, 34-54, 58-78, 87-107, 109-129, 163-183, 185-205, 219-239, 242-262, 271-291, 299-319, 335-355, and 359-379; these read INSFFLIGALLTAVSVLLSPM, ILLIFLAVGILAGEDGPGGIL, YSTAYLVSNLALAIILLDGGM, VALWPALSLATFGVAITTSIT, MMAAWLFDLHWLQGLLVGAIV, PMAVFLTVTLIAILANVDTEM, FSFMFISFIKQFGLGICLGLG, LADGLYSILVLSGGLIIYAAS, LGGSGILSIYLVGLFLGNKPT, VLDGMTWVSQIGMFLVLGLLL, ILIPGFALAFGMILFARPVAV, WFISWVGLRGAVPIILAVFPM, and LPGAQLYFNLAFFVVLVSLLV. Residues 405–486 enclose the RCK C-terminal domain; it reads SGVEIYPSSE…LEALSNLFSQ (82 aa).

Belongs to the monovalent cation:proton antiporter 1 (CPA1) transporter (TC 2.A.36) family. NhaP2 subfamily.

The protein resides in the cell inner membrane. It catalyses the reaction K(+)(in) + H(+)(out) = K(+)(out) + H(+)(in). K(+)/H(+) antiporter that extrudes potassium in exchange for external protons and maintains the internal concentration of potassium under toxic levels. This Shewanella baltica (strain OS155 / ATCC BAA-1091) protein is K(+)/H(+) antiporter NhaP2.